The chain runs to 189 residues: Transcription factor FapR (189 aa).

It belongs to the FapR family.

Its function is as follows. Transcriptional factor involved in regulation of membrane lipid biosynthesis by repressing genes involved in fatty acid and phospholipid metabolism. The chain is Transcription factor FapR from Listeria monocytogenes serotype 4a (strain HCC23).